The chain runs to 318 residues: Methionyl-tRNA formyltransferase (318 aa).

112-115 (SLLP) provides a ligand contact to (6S)-5,6,7,8-tetrahydrofolate.

The protein belongs to the Fmt family.

It carries out the reaction L-methionyl-tRNA(fMet) + (6R)-10-formyltetrahydrofolate = N-formyl-L-methionyl-tRNA(fMet) + (6S)-5,6,7,8-tetrahydrofolate + H(+). In terms of biological role, attaches a formyl group to the free amino group of methionyl-tRNA(fMet). The formyl group appears to play a dual role in the initiator identity of N-formylmethionyl-tRNA by promoting its recognition by IF2 and preventing the misappropriation of this tRNA by the elongation apparatus. This chain is Methionyl-tRNA formyltransferase, found in Citrifermentans bemidjiense (strain ATCC BAA-1014 / DSM 16622 / JCM 12645 / Bem) (Geobacter bemidjiensis).